Reading from the N-terminus, the 174-residue chain is Gamma-crystallin A (174 aa).

Beta/gamma crystallin 'Greek key' domains are found at residues 2–40 (GKIT…RVDS) and 41–83 (GCWM…RSIP). Positions 84-87 (YTSS) are connecting peptide. Beta/gamma crystallin 'Greek key' domains follow at residues 88-128 (HRIR…HVLE) and 129-171 (GCWV…RRVM).

This sequence belongs to the beta/gamma-crystallin family.

Crystallins are the dominant structural components of the vertebrate eye lens. In Mus musculus (Mouse), this protein is Gamma-crystallin A (Cryga).